Here is a 382-residue protein sequence, read N- to C-terminus: Lipoyl synthase, mitochondrial (382 aa).

The transit peptide at 1-30 directs the protein to the mitochondrion; it reads MHGRRHLAASLARALTYAPSRSISSTPSLL. The segment covering 25–34 has biased composition (polar residues); it reads STPSLLQTLD. The interval 25–46 is disordered; the sequence is STPSLLQTLDPSTPSPAAAPPT. [4Fe-4S] cluster is bound by residues Cys-112, Cys-117, Cys-123, Cys-143, Cys-147, Cys-150, and Ser-359. In terms of domain architecture, Radical SAM core spans 128–348; the sequence is ETGTATATIM…RSLGVDMGFR (221 aa).

This sequence belongs to the radical SAM superfamily. Lipoyl synthase family. Requires [4Fe-4S] cluster as cofactor.

The protein resides in the mitochondrion. It catalyses the reaction [[Fe-S] cluster scaffold protein carrying a second [4Fe-4S](2+) cluster] + N(6)-octanoyl-L-lysyl-[protein] + 2 oxidized [2Fe-2S]-[ferredoxin] + 2 S-adenosyl-L-methionine + 4 H(+) = [[Fe-S] cluster scaffold protein] + N(6)-[(R)-dihydrolipoyl]-L-lysyl-[protein] + 4 Fe(3+) + 2 hydrogen sulfide + 2 5'-deoxyadenosine + 2 L-methionine + 2 reduced [2Fe-2S]-[ferredoxin]. Its pathway is protein modification; protein lipoylation via endogenous pathway; protein N(6)-(lipoyl)lysine from octanoyl-[acyl-carrier-protein]: step 2/2. In terms of biological role, catalyzes the radical-mediated insertion of two sulfur atoms into the C-6 and C-8 positions of the octanoyl moiety bound to the lipoyl domains of lipoate-dependent enzymes, thereby converting the octanoylated domains into lipoylated derivatives. This Oryza sativa subsp. japonica (Rice) protein is Lipoyl synthase, mitochondrial.